We begin with the raw amino-acid sequence, 778 residues long: Tubulin polyglutamylase ttll6 (778 aa).

A disordered region spans residues 1–43 (MGTPAERSVSEVCRCEPDPGLEGEGWGSDTHAEPSNTPIPLPV). Residues 51-393 (KKKLWINLTN…LGACDRRKIT (343 aa)) enclose the TTL domain. ATP contacts are provided by residues Lys168, 174-175 (QG), 196-199 (QVYM), and 209-211 (KFD). Gln174 serves as a coordination point for a protein. Arg235 contributes to the L-glutamate binding site. 257 to 258 (TN) contributes to the ATP binding site. L-glutamate is bound by residues Tyr259 and Lys277. Residues Asp340, Glu353, and Asn355 each contribute to the Mg(2+) site. Residue His356 participates in a protein binding. The interval 365–445 (RLDREVKDSL…MGGFRRIFPR (81 aa)) is c-MTBD region. Lys371 serves as a coordination point for L-glutamate. Composition is skewed to basic and acidic residues over residues 402 to 418 (ERLQ…EEPR), 485 to 510 (KQEQ…GEKV), 533 to 542 (SVREETPVSL), and 760 to 778 (LSHD…EHSL). Disordered stretches follow at residues 402–422 (ERLQ…QSQA), 485–542 (KQEQ…PVSL), and 758–778 (PHLS…EHSL).

The protein belongs to the tubulin--tyrosine ligase family. The cofactor is Mg(2+).

Its subcellular location is the cytoplasm. The protein localises to the cytoskeleton. The protein resides in the cilium axoneme. It localises to the cilium basal body. The enzyme catalyses L-glutamyl-[protein] + L-glutamate + ATP = gamma-L-glutamyl-L-glutamyl-[protein] + ADP + phosphate + H(+). The catalysed reaction is (L-glutamyl)(n)-gamma-L-glutamyl-L-glutamyl-[protein] + L-glutamate + ATP = (L-glutamyl)(n+1)-gamma-L-glutamyl-L-glutamyl-[protein] + ADP + phosphate + H(+). Functionally, polyglutamylase which modifies both tubulin and non-tubulin proteins, generating alpha-linked polyglutamate side chains on the gamma-carboxyl group of specific glutamate residues of target proteins. Preferentially mediates ATP-dependent long polyglutamate chain elongation over the initiation step of the polyglutamylation reaction. Preferentially modifies the alpha-tubulin tail over a beta-tail. Mediates microtubule polyglutamylation in cilia axoneme, which is important for ciliary structural formation and motility. Polyglutamylates olfactory cilia, necessary for the regulation of ciliary structure and beating. In Danio rerio (Zebrafish), this protein is Tubulin polyglutamylase ttll6.